The primary structure comprises 838 residues: Kinesin-like protein KIFC2 (838 aa).

The segment covering 23–32 (AAAAEPGDPA) has biased composition (low complexity). Disordered stretches follow at residues 23 to 48 (AAAA…DLPA) and 140 to 185 (LLQG…GQQP). The segment covering 156-167 (DGSTSQEESPSH) has biased composition (polar residues). A coiled-coil region spans residues 186–351 (LQLEEDQRAW…SLRQGCGDLR (166 aa)). The Kinesin motor domain maps to 409–740 (NIRVLCRLRP…ARRSPRGRRI (332 aa)). 484–491 (GQTGTGKT) is a binding site for ATP. The disordered stretch occupies residues 718 to 792 (RSPPTRARPP…SPGPPAPLRR (75 aa)).

This sequence belongs to the TRAFAC class myosin-kinesin ATPase superfamily. Kinesin family.

It is found in the cytoplasm. The protein localises to the cytoskeleton. In terms of biological role, may play a role in microtubule-dependent retrograde axonal transport. May function as the motor for the transport of multivesicular body (MVB)-like organelles in dendrites. This is Kinesin-like protein KIFC2 (KIFC2) from Homo sapiens (Human).